A 236-amino-acid chain; its full sequence is Alanyl-tRNA editing protein AlaX-M (236 aa).

The Zn(2+) site is built by His-101, His-105, and His-205.

The protein belongs to the class-II aminoacyl-tRNA synthetase family. Editing domain AlaX-M subfamily. Zn(2+) serves as cofactor.

Its subcellular location is the cytoplasm. Its function is as follows. Functions in trans to edit the amino acid moiety from incorrectly charged Ser-tRNA(Ala). This chain is Alanyl-tRNA editing protein AlaX-M (alaXM), found in Saccharolobus solfataricus (strain ATCC 35092 / DSM 1617 / JCM 11322 / P2) (Sulfolobus solfataricus).